The following is a 688-amino-acid chain: Eukaryotic translation initiation factor 3 subunit B (688 aa).

Residues 1–32 (MAKKKGENYDSDGGDDQDYDEEPNFDDPEGFV) are disordered. A compositionally biased stretch (acidic residues) spans 9-32 (YDSDGGDDQDYDEEPNFDDPEGFV). The RRM domain occupies 57-141 (NVIVVDNIPV…HTLLVNLFSD (85 aa)). 6 WD repeats span residues 208 to 246 (RDRF…KINK), 247 to 287 (FPHS…EKRS), 291 to 329 (DGTS…LLDK), 332 to 367 (IKVQ…TLLE), 440 to 482 (EVKE…EPTM), and 527 to 572 (GDHF…KRVN). Residues 613 to 642 (RIRMTRASKELLEKRAKLREQFVEYRTKRV) adopt a coiled-coil conformation.

This sequence belongs to the eIF-3 subunit B family. As to quaternary structure, component of the eukaryotic translation initiation factor 3 (eIF-3) complex.

It localises to the cytoplasm. Its function is as follows. RNA-binding component of the eukaryotic translation initiation factor 3 (eIF-3) complex, which is involved in protein synthesis of a specialized repertoire of mRNAs and, together with other initiation factors, stimulates binding of mRNA and methionyl-tRNAi to the 40S ribosome. The eIF-3 complex specifically targets and initiates translation of a subset of mRNAs involved in cell proliferation. The sequence is that of Eukaryotic translation initiation factor 3 subunit B from Aedes aegypti (Yellowfever mosquito).